The following is a 157-amino-acid chain: Cyclic pyranopterin monophosphate synthase (157 aa).

Substrate is bound by residues 75-77 and 111-112; these read LCH and ME. Aspartate 126 is an active-site residue.

Belongs to the MoaC family. Homohexamer; trimer of dimers.

It catalyses the reaction (8S)-3',8-cyclo-7,8-dihydroguanosine 5'-triphosphate = cyclic pyranopterin phosphate + diphosphate. The protein operates within cofactor biosynthesis; molybdopterin biosynthesis. Its function is as follows. Catalyzes the conversion of (8S)-3',8-cyclo-7,8-dihydroguanosine 5'-triphosphate to cyclic pyranopterin monophosphate (cPMP). This Novosphingobium aromaticivorans (strain ATCC 700278 / DSM 12444 / CCUG 56034 / CIP 105152 / NBRC 16084 / F199) protein is Cyclic pyranopterin monophosphate synthase.